The primary structure comprises 291 residues: Protein ILRUN (291 aa).

The tract at residues 199–291 (NTQPHRKVEG…LHGPYPFGQS (93 aa)) is disordered. Residues 212 to 228 (PFASPQKNRQSDENNLT) show a composition bias toward polar residues. Ser-215, Ser-222, and Ser-265 each carry phosphoserine. Residues 257-276 (LSQSSVNLSPSSPANNLSVV) are compositionally biased toward low complexity.

In terms of assembly, interacts with IRF3; the interaction inhibits IRF3 binding to its DNA consensus sequence.

Its subcellular location is the cytoplasm. The protein localises to the nucleus. Its function is as follows. Negative regulator of innate antiviral response. Blocks IRF3-dependent cytokine production such as IFNA, IFNB and TNF. Interacts with IRF3 and inhibits IRF3 recruitment to type I IFN promoter sequences while also reducing nuclear levels of the coactivators EP300 and CREBBP. The polypeptide is Protein ILRUN (Mus musculus (Mouse)).